A 494-amino-acid polypeptide reads, in one-letter code: UDP-N-acetylmuramoyl-L-alanyl-D-glutamate--L-lysine ligase (494 aa).

Position 30 (serine 30) interacts with UDP-N-acetyl-alpha-D-muramoyl-L-alanyl-D-glutamate. 110–116 (GTNGKTS) provides a ligand contact to ATP. UDP-N-acetyl-alpha-D-muramoyl-L-alanyl-D-glutamate-binding positions include 152 to 153 (TT), serine 179, and arginine 187. The residue at position 219 (lysine 219) is an N6-carboxylysine. The short motif at 406–409 (DNPA) is the L-lysine recognition motif element.

This sequence belongs to the MurCDEF family. MurE subfamily. Carboxylation is probably crucial for Mg(2+) binding and, consequently, for the gamma-phosphate positioning of ATP.

The protein localises to the cytoplasm. The enzyme catalyses UDP-N-acetyl-alpha-D-muramoyl-L-alanyl-D-glutamate + L-lysine + ATP = UDP-N-acetyl-alpha-D-muramoyl-L-alanyl-gamma-D-glutamyl-L-lysine + ADP + phosphate + H(+). It functions in the pathway cell wall biogenesis; peptidoglycan biosynthesis. Functionally, catalyzes the addition of L-lysine to the nucleotide precursor UDP-N-acetylmuramoyl-L-alanyl-D-glutamate (UMAG) in the biosynthesis of bacterial cell-wall peptidoglycan. The protein is UDP-N-acetylmuramoyl-L-alanyl-D-glutamate--L-lysine ligase of Staphylococcus aureus (strain Mu3 / ATCC 700698).